The sequence spans 467 residues: Ran-binding protein M homolog (467 aa).

The disordered stretch occupies residues methionine 1–leucine 25. Positions asparagine 9 to leucine 25 are enriched in polar residues. The B30.2/SPRY domain occupies aspartate 31–phenylalanine 219. The 33-residue stretch at proline 244–valine 276 folds into the LisH domain. The region spanning alanine 295–glutamate 353 is the CTLH domain.

This sequence belongs to the RANBP9/10 family. As to quaternary structure, interacts with WDR36, WDS, GID8, MAEA and RMD5.

The protein resides in the cytoplasm. Its subcellular location is the nucleus. The protein localises to the perinuclear region. This is Ran-binding protein M homolog from Arabidopsis thaliana (Mouse-ear cress).